We begin with the raw amino-acid sequence, 179 residues long: Transcription factor E (179 aa).

The region spanning 1–102 is the HTH TFE/IIEalpha-type domain; that stretch reads MAKKKVKYTF…YWRFDSRKAA (102 aa).

This sequence belongs to the TFE family. In terms of assembly, monomer. Interaction with RNA polymerase subunits RpoF and RpoE is necessary for Tfe stimulatory transcription activity. Able to interact with Tbp and RNA polymerase in the absence of DNA promoter. Interacts both with the preinitiation and elongation complexes.

In terms of biological role, transcription factor that plays a role in the activation of archaeal genes transcribed by RNA polymerase. Facilitates transcription initiation by enhancing TATA-box recognition by TATA-box-binding protein (Tbp), and transcription factor B (Tfb) and RNA polymerase recruitment. Not absolutely required for transcription in vitro, but particularly important in cases where Tbp or Tfb function is not optimal. It dynamically alters the nucleic acid-binding properties of RNA polymerases by stabilizing the initiation complex and destabilizing elongation complexes. Seems to translocate with the RNA polymerase following initiation and acts by binding to the non template strand of the transcription bubble in elongation complexes. This Methanosphaera stadtmanae (strain ATCC 43021 / DSM 3091 / JCM 11832 / MCB-3) protein is Transcription factor E.